Consider the following 115-residue polypeptide: NADH-ubiquinone oxidoreductase chain 3 (115 aa).

A run of 3 helical transmembrane segments spans residues 4 to 24 (ILTLFINITLSLCLISIAFWL), 55 to 75 (FFLVGITFLLFDLEIALLLPL), and 84 to 104 (SYLTMTVSFMLVSALALGLAY).

It belongs to the complex I subunit 3 family. As to quaternary structure, core subunit of respiratory chain NADH dehydrogenase (Complex I) which is composed of 45 different subunits. Interacts with TMEM186. Interacts with TMEM242.

The protein localises to the mitochondrion inner membrane. The enzyme catalyses a ubiquinone + NADH + 5 H(+)(in) = a ubiquinol + NAD(+) + 4 H(+)(out). Functionally, core subunit of the mitochondrial membrane respiratory chain NADH dehydrogenase (Complex I) which catalyzes electron transfer from NADH through the respiratory chain, using ubiquinone as an electron acceptor. Essential for the catalytic activity of complex I. This Necromys lactens (Rufous-bellied bolo mouse) protein is NADH-ubiquinone oxidoreductase chain 3.